The sequence spans 326 residues: tRNA N6-adenosine threonylcarbamoyltransferase (326 aa).

Fe cation is bound by residues H111 and H115. Substrate-binding positions include T134–G138, D167, G180, D184, and N268. Residue D293 participates in Fe cation binding.

The protein belongs to the KAE1 / TsaD family. Fe(2+) serves as cofactor.

Its subcellular location is the cytoplasm. It carries out the reaction L-threonylcarbamoyladenylate + adenosine(37) in tRNA = N(6)-L-threonylcarbamoyladenosine(37) in tRNA + AMP + H(+). Its function is as follows. Required for the formation of a threonylcarbamoyl group on adenosine at position 37 (t(6)A37) in tRNAs that read codons beginning with adenine. Is involved in the transfer of the threonylcarbamoyl moiety of threonylcarbamoyl-AMP (TC-AMP) to the N6 group of A37, together with TsaE and TsaB. TsaD likely plays a direct catalytic role in this reaction. In Dehalococcoides mccartyi (strain ATCC BAA-2100 / JCM 16839 / KCTC 5957 / BAV1), this protein is tRNA N6-adenosine threonylcarbamoyltransferase.